A 479-amino-acid polypeptide reads, in one-letter code: NAC domain-containing protein 45 (479 aa).

The region spanning L6–K157 is the NAC domain. The DNA-binding element occupies I105–K163.

In terms of tissue distribution, expressed in a few sieve element cells before enucleation and in phloem-pole pericycle cells.

It localises to the nucleus. Transcription factor directing sieve element enucleation and cytosol degradation. Not required for formation of lytic vacuoles. Regulates, with NAC086, the transcription of NEN1, NEN2, NEN3, NEN4, RTM1, RTM2, UBP16, PLDZETA, ABCB10 and At1g26450. The sequence is that of NAC domain-containing protein 45 from Arabidopsis thaliana (Mouse-ear cress).